The chain runs to 338 residues: Ferrochelatase (338 aa).

Residues His-207 and Glu-293 each contribute to the Fe cation site.

It belongs to the ferrochelatase family.

It localises to the cytoplasm. The enzyme catalyses heme b + 2 H(+) = protoporphyrin IX + Fe(2+). It participates in porphyrin-containing compound metabolism; protoheme biosynthesis; protoheme from protoporphyrin-IX: step 1/1. In terms of biological role, catalyzes the ferrous insertion into protoporphyrin IX. This chain is Ferrochelatase, found in Shewanella denitrificans (strain OS217 / ATCC BAA-1090 / DSM 15013).